The primary structure comprises 442 residues: 3-phosphoshikimate 1-carboxyvinyltransferase (442 aa).

3-phosphoshikimate contacts are provided by Lys25, Ser26, and Arg30. Lys25 contributes to the phosphoenolpyruvate binding site. Phosphoenolpyruvate-binding residues include Gly97 and Arg125. Ser170, Gln172, Asp323, and Lys350 together coordinate 3-phosphoshikimate. Gln172 is a phosphoenolpyruvate binding site. Asp323 (proton acceptor) is an active-site residue. Phosphoenolpyruvate-binding residues include Arg354 and Arg399.

Belongs to the EPSP synthase family. Monomer.

The protein localises to the cytoplasm. The catalysed reaction is 3-phosphoshikimate + phosphoenolpyruvate = 5-O-(1-carboxyvinyl)-3-phosphoshikimate + phosphate. It functions in the pathway metabolic intermediate biosynthesis; chorismate biosynthesis; chorismate from D-erythrose 4-phosphate and phosphoenolpyruvate: step 6/7. Catalyzes the transfer of the enolpyruvyl moiety of phosphoenolpyruvate (PEP) to the 5-hydroxyl of shikimate-3-phosphate (S3P) to produce enolpyruvyl shikimate-3-phosphate and inorganic phosphate. The sequence is that of 3-phosphoshikimate 1-carboxyvinyltransferase from Bartonella quintana (strain Toulouse) (Rochalimaea quintana).